The chain runs to 110 residues: Large ribosomal subunit protein uL22 (110 aa).

This sequence belongs to the universal ribosomal protein uL22 family. As to quaternary structure, part of the 50S ribosomal subunit.

In terms of biological role, this protein binds specifically to 23S rRNA; its binding is stimulated by other ribosomal proteins, e.g. L4, L17, and L20. It is important during the early stages of 50S assembly. It makes multiple contacts with different domains of the 23S rRNA in the assembled 50S subunit and ribosome. Functionally, the globular domain of the protein is located near the polypeptide exit tunnel on the outside of the subunit, while an extended beta-hairpin is found that lines the wall of the exit tunnel in the center of the 70S ribosome. The sequence is that of Large ribosomal subunit protein uL22 from Stutzerimonas stutzeri (strain A1501) (Pseudomonas stutzeri).